Here is a 115-residue protein sequence, read N- to C-terminus: Putative type I restriction enzyme MpnIIP endonuclease subunit middle part (115 aa).

In terms of biological role, the middle section of a putative type I restriction enzyme that if reconstituted might recognize 5'-GAN(7)TAY-3' and cleave a random distance away. Subunit R is required for both nuclease and ATPase activities, but not for modification. The protein is Putative type I restriction enzyme MpnIIP endonuclease subunit middle part of Mycoplasma pneumoniae (strain ATCC 29342 / M129 / Subtype 1) (Mycoplasmoides pneumoniae).